Reading from the N-terminus, the 131-residue chain is Profilin-4 (131 aa).

Cysteine 13 and cysteine 115 are disulfide-bonded. The Involved in PIP2 interaction motif lies at 81 to 97 (VVIRGKKGTGGITIKKT). A Phosphothreonine modification is found at threonine 111.

This sequence belongs to the profilin family. Occurs in many kinds of cells as a complex with monomeric actin in a 1:1 ratio. Post-translationally, phosphorylated by MAP kinases. As to expression, expressed predominantly in endosperm but is also found at low levels in all tissues examined, including mature and germinated pollen.

It is found in the cytoplasm. The protein resides in the cytoskeleton. Its function is as follows. Binds to actin and affects the structure of the cytoskeleton. At high concentrations, profilin prevents the polymerization of actin, whereas it enhances it at low concentrations. By binding to PIP2, it inhibits the formation of IP3 and DG. Has a high affinity for poly-proline. The chain is Profilin-4 (PRO4) from Zea mays (Maize).